A 217-amino-acid polypeptide reads, in one-letter code: Thymidylate kinase (217 aa).

11-18 (GLEGAGKS) serves as a coordination point for ATP.

This sequence belongs to the thymidylate kinase family.

It carries out the reaction dTMP + ATP = dTDP + ADP. Its function is as follows. Phosphorylation of dTMP to form dTDP in both de novo and salvage pathways of dTTP synthesis. The protein is Thymidylate kinase of Alkalilimnicola ehrlichii (strain ATCC BAA-1101 / DSM 17681 / MLHE-1).